We begin with the raw amino-acid sequence, 194 residues long: ATP-dependent Clp protease proteolytic subunit 3 (194 aa).

Catalysis depends on S96, which acts as the Nucleophile. The active site involves H121.

The protein belongs to the peptidase S14 family. Fourteen ClpP subunits assemble into 2 heptameric rings which stack back to back to give a disk-like structure with a central cavity, resembling the structure of eukaryotic proteasomes.

It localises to the cytoplasm. The catalysed reaction is Hydrolysis of proteins to small peptides in the presence of ATP and magnesium. alpha-casein is the usual test substrate. In the absence of ATP, only oligopeptides shorter than five residues are hydrolyzed (such as succinyl-Leu-Tyr-|-NHMec, and Leu-Tyr-Leu-|-Tyr-Trp, in which cleavage of the -Tyr-|-Leu- and -Tyr-|-Trp bonds also occurs).. In terms of biological role, cleaves peptides in various proteins in a process that requires ATP hydrolysis. Has a chymotrypsin-like activity. Plays a major role in the degradation of misfolded proteins. The polypeptide is ATP-dependent Clp protease proteolytic subunit 3 (Rhizobium etli (strain ATCC 51251 / DSM 11541 / JCM 21823 / NBRC 15573 / CFN 42)).